Here is a 1213-residue protein sequence, read N- to C-terminus: Protein jagged-1b (1213 aa).

An N-terminal signal peptide occupies residues M1–S26. The Extracellular portion of the chain corresponds to D27–Y1064. An N-linked (GlcNAc...) asparagine glycan is attached at N139. Residues V182 to C226 form the DSL domain. 2 disulfide bridges follow: C184–C193 and C197–C209. N214 carries N-linked (GlcNAc...) asparagine glycosylation. 39 cysteine pairs are disulfide-bonded: C217–C226, C231–C242, C235–C248, C250–C259, C262–C273, C268–C279, C281–C290, C297–C309, C303–C319, C321–C330, C337–C348, C342–C357, C359–C368, C375–C386, C380–C395, C397–C406, C413–C424, C418–C433, C435–C444, C451–C461, C455–C470, C472–C481, C488–C499, C493–C508, C510–C519, C526–C537, C531–C546, C548–C557, C596–C612, C614–C623, C630–C641, C635–C650, C652–C661, C668–C679, C673–C688, C690–C699, C706–C717, C711–C726, and C728–C737. An EGF-like 1 domain is found at N227–D260. Positions K261–D291 constitute an EGF-like 2; atypical domain. EGF-like domains are found at residues D293–E331 and A333–E369. An EGF-like 5; calcium-binding domain is found at N371 to Q407. Residues D409–D445 form the EGF-like 6; calcium-binding domain. One can recognise an EGF-like 7; calcium-binding domain in the interval N447–E482. Positions D484–Q520 constitute an EGF-like 8; calcium-binding domain. EGF-like domains are found at residues D522 to S558 and S592 to H624. N-linked (GlcNAc...) asparagine glycosylation occurs at N556. The region spanning N626 to E662 is the EGF-like 11; calcium-binding domain. Residues N664–H700 form the EGF-like 12; calcium-binding domain. The 37-residue stretch at R702–N738 folds into the EGF-like 13 domain. Residue N742 is glycosylated (N-linked (GlcNAc...) asparagine). 9 cysteine pairs are disulfide-bonded: C745-C756, C750-C765, C767-C776, C783-C794, C788-C803, C805-C814, C821-C832, C826-C841, and C843-C852. Residues L746–T777 enclose the EGF-like 14 domain. An EGF-like 15; calcium-binding domain is found at N779 to R815. The EGF-like 16; calcium-binding domain maps to N817–Q853. The VWFC domain maps to C860–C914. An EGF-like 17 domain is found at K918–A956. N957, N988, and N1042 each carry an N-linked (GlcNAc...) asparagine glycan. Residues L1065–W1087 form a helical membrane-spanning segment. At C1088–V1213 the chain is on the cytoplasmic side. Residues E1181–T1202 form a disordered region.

It localises to the membrane. The protein localises to the cell membrane. Its function is as follows. Ligand for Notch receptors and involved in the mediation of Notch signaling. Seems to be involved in cell-fate decisions. This Danio rerio (Zebrafish) protein is Protein jagged-1b (jag1b).